The primary structure comprises 278 residues: Tryptophan synthase alpha chain (278 aa).

Residues glutamate 50 and aspartate 61 each act as proton acceptor in the active site.

It belongs to the TrpA family. Tetramer of two alpha and two beta chains.

It catalyses the reaction (1S,2R)-1-C-(indol-3-yl)glycerol 3-phosphate + L-serine = D-glyceraldehyde 3-phosphate + L-tryptophan + H2O. It participates in amino-acid biosynthesis; L-tryptophan biosynthesis; L-tryptophan from chorismate: step 5/5. The alpha subunit is responsible for the aldol cleavage of indoleglycerol phosphate to indole and glyceraldehyde 3-phosphate. The polypeptide is Tryptophan synthase alpha chain (Afipia carboxidovorans (strain ATCC 49405 / DSM 1227 / KCTC 32145 / OM5) (Oligotropha carboxidovorans)).